Consider the following 763-residue polypeptide: Phosphoglycerol transferase I (763 aa).

4 helical membrane-spanning segments follow: residues 1–21 (MSEL…AWKA), 26–46 (WWFA…ITLF), 77–97 (ILPG…LGWI), and 108–128 (FGYS…SPAF).

Belongs to the OpgB family.

The protein localises to the cell inner membrane. The enzyme catalyses a phosphatidylglycerol + a membrane-derived-oligosaccharide D-glucose = a 1,2-diacyl-sn-glycerol + a membrane-derived-oligosaccharide 6-(glycerophospho)-D-glucose.. Its pathway is glycan metabolism; osmoregulated periplasmic glucan (OPG) biosynthesis. Functionally, transfers a phosphoglycerol residue from phosphatidylglycerol to the membrane-bound nascent glucan backbones. The protein is Phosphoglycerol transferase I of Shigella boydii serotype 18 (strain CDC 3083-94 / BS512).